We begin with the raw amino-acid sequence, 430 residues long: Tyrosine--tRNA ligase (430 aa).

Tyr32 contributes to the L-tyrosine binding site. The short motif at 37–46 is the 'HIGH' region element; sequence PTADSLHIGH. Positions 172 and 176 each coordinate L-tyrosine. The short motif at 232–236 is the 'KMSKS' region element; sequence KFGKT. Residue Lys235 participates in ATP binding. The region spanning 362–429 is the S4 RNA-binding domain; sequence VKAVDLFVDN…GKKNYFLLIA (68 aa).

Belongs to the class-I aminoacyl-tRNA synthetase family. TyrS type 1 subfamily. As to quaternary structure, homodimer.

It localises to the cytoplasm. It catalyses the reaction tRNA(Tyr) + L-tyrosine + ATP = L-tyrosyl-tRNA(Tyr) + AMP + diphosphate + H(+). Its function is as follows. Catalyzes the attachment of tyrosine to tRNA(Tyr) in a two-step reaction: tyrosine is first activated by ATP to form Tyr-AMP and then transferred to the acceptor end of tRNA(Tyr). The chain is Tyrosine--tRNA ligase from Bacteroides thetaiotaomicron (strain ATCC 29148 / DSM 2079 / JCM 5827 / CCUG 10774 / NCTC 10582 / VPI-5482 / E50).